The primary structure comprises 449 residues: MATDIEQKVMEAKMASIVLASVDTQTKDNALEAMAKALDANRNKILEANKADLEEAERMKNEGKLSQALVDRLKVTDPKIDGMISGIRDVIKLEDPSGRTINTLELDKGLELYQVSSPIGLIGVIFESRPDVVPQVMSLCLKSGNATVFKGGSEALNSNRVIFNILVEALEDTPGIPKGAFQLMETREEVMDILALDEYIDLLIPRGSNDFVKFIQDNTKISVLGHADGICHVYVDTNADLNKAYDVCFDSKVQYPAVCNAMETLLINREIAEEFLPEMVRRYEEVGVELRFDEGSYAIAEKLGSANIAKATEDDWKTEYNDFILSIKLVDSIEEAIDHINKYGSHHTDAIITENKTKRKQFIALVDSSSVMVNASTRFADGFRYGKGAEVGISTNKIHARGPVGMEGLVIYKYVLLGNGDKVATYAGDTPRPFTHKELDSKLSDIINE.

This sequence belongs to the gamma-glutamyl phosphate reductase family.

The protein resides in the cytoplasm. It carries out the reaction L-glutamate 5-semialdehyde + phosphate + NADP(+) = L-glutamyl 5-phosphate + NADPH + H(+). Its pathway is amino-acid biosynthesis; L-proline biosynthesis; L-glutamate 5-semialdehyde from L-glutamate: step 2/2. In terms of biological role, catalyzes the NADPH-dependent reduction of L-glutamate 5-phosphate into L-glutamate 5-semialdehyde and phosphate. The product spontaneously undergoes cyclization to form 1-pyrroline-5-carboxylate. This Methanococcoides burtonii (strain DSM 6242 / NBRC 107633 / OCM 468 / ACE-M) protein is Gamma-glutamyl phosphate reductase.